We begin with the raw amino-acid sequence, 296 residues long: 4-diphosphocytidyl-2-C-methyl-D-erythritol kinase (296 aa).

Residue K18 is part of the active site. 103 to 113 (PHGAGLGGGSS) is an ATP binding site. D146 is an active-site residue.

This sequence belongs to the GHMP kinase family. IspE subfamily.

It carries out the reaction 4-CDP-2-C-methyl-D-erythritol + ATP = 4-CDP-2-C-methyl-D-erythritol 2-phosphate + ADP + H(+). Its pathway is isoprenoid biosynthesis; isopentenyl diphosphate biosynthesis via DXP pathway; isopentenyl diphosphate from 1-deoxy-D-xylulose 5-phosphate: step 3/6. In terms of biological role, catalyzes the phosphorylation of the position 2 hydroxy group of 4-diphosphocytidyl-2C-methyl-D-erythritol. This Solidesulfovibrio magneticus (strain ATCC 700980 / DSM 13731 / RS-1) (Desulfovibrio magneticus) protein is 4-diphosphocytidyl-2-C-methyl-D-erythritol kinase.